The primary structure comprises 163 residues: ATP synthase subunit b 1 (163 aa).

A helical membrane pass occupies residues Phe-5 to Leu-25.

Belongs to the ATPase B chain family. F-type ATPases have 2 components, F(1) - the catalytic core - and F(0) - the membrane proton channel. F(1) has five subunits: alpha(3), beta(3), gamma(1), delta(1), epsilon(1). F(0) has three main subunits: a(1), b(2) and c(10-14). The alpha and beta chains form an alternating ring which encloses part of the gamma chain. F(1) is attached to F(0) by a central stalk formed by the gamma and epsilon chains, while a peripheral stalk is formed by the delta and b chains.

It is found in the cell inner membrane. Functionally, f(1)F(0) ATP synthase produces ATP from ADP in the presence of a proton or sodium gradient. F-type ATPases consist of two structural domains, F(1) containing the extramembraneous catalytic core and F(0) containing the membrane proton channel, linked together by a central stalk and a peripheral stalk. During catalysis, ATP synthesis in the catalytic domain of F(1) is coupled via a rotary mechanism of the central stalk subunits to proton translocation. In terms of biological role, component of the F(0) channel, it forms part of the peripheral stalk, linking F(1) to F(0). The polypeptide is ATP synthase subunit b 1 (Rhizobium etli (strain ATCC 51251 / DSM 11541 / JCM 21823 / NBRC 15573 / CFN 42)).